The following is a 483-amino-acid chain: tRNA-2-methylthio-N(6)-dimethylallyladenosine synthase (483 aa).

In terms of domain architecture, MTTase N-terminal spans Lys31 to Asp148. 6 residues coordinate [4Fe-4S] cluster: Cys40, Cys77, Cys111, Cys192, Cys196, and Cys199. The Radical SAM core domain occupies Arg178 to Arg410. Residues Asp413–Asn477 enclose the TRAM domain.

It belongs to the methylthiotransferase family. MiaB subfamily. Monomer. Requires [4Fe-4S] cluster as cofactor.

It localises to the cytoplasm. The enzyme catalyses N(6)-dimethylallyladenosine(37) in tRNA + (sulfur carrier)-SH + AH2 + 2 S-adenosyl-L-methionine = 2-methylsulfanyl-N(6)-dimethylallyladenosine(37) in tRNA + (sulfur carrier)-H + 5'-deoxyadenosine + L-methionine + A + S-adenosyl-L-homocysteine + 2 H(+). In terms of biological role, catalyzes the methylthiolation of N6-(dimethylallyl)adenosine (i(6)A), leading to the formation of 2-methylthio-N6-(dimethylallyl)adenosine (ms(2)i(6)A) at position 37 in tRNAs that read codons beginning with uridine. This is tRNA-2-methylthio-N(6)-dimethylallyladenosine synthase from Acinetobacter baylyi (strain ATCC 33305 / BD413 / ADP1).